A 567-amino-acid chain; its full sequence is Urease subunit alpha (567 aa).

In terms of domain architecture, Urease spans 129–567 (GGIDSHIHFI…LPLAQRYFLF (439 aa)). H134, H136, and K217 together coordinate Ni(2+). Position 217 is an N6-carboxylysine (K217). H219 provides a ligand contact to substrate. 2 residues coordinate Ni(2+): H246 and H272. Catalysis depends on H320, which acts as the Proton donor. Ni(2+) is bound at residue D360.

This sequence belongs to the metallo-dependent hydrolases superfamily. Urease alpha subunit family. As to quaternary structure, heterotrimer of UreA (gamma), UreB (beta) and UreC (alpha) subunits. Three heterotrimers associate to form the active enzyme. The cofactor is Ni cation. In terms of processing, carboxylation allows a single lysine to coordinate two nickel ions.

It localises to the cytoplasm. It catalyses the reaction urea + 2 H2O + H(+) = hydrogencarbonate + 2 NH4(+). The protein operates within nitrogen metabolism; urea degradation; CO(2) and NH(3) from urea (urease route): step 1/1. This chain is Urease subunit alpha, found in Pseudomonas entomophila (strain L48).